Here is a 236-residue protein sequence, read N- to C-terminus: Auxin-responsive protein IAA16 (236 aa).

Residues 9–13 (LRLGL) carry the EAR-like (transcriptional repression) motif. Residues 82-110 (KNVMSGQKPTTGDATEGNDKTSGSSGATS) form a disordered region. Over residues 85-94 (MSGQKPTTGD) the composition is skewed to polar residues. Residues 118–218 (VAYVKVSMDG…SCKRIRIMKG (101 aa)) enclose the PB1 domain.

Belongs to the Aux/IAA family. In terms of assembly, homodimers and heterodimers.

It is found in the nucleus. Its function is as follows. Aux/IAA proteins are short-lived transcriptional factors that function as repressors of early auxin response genes at low auxin concentrations. Repression is thought to result from the interaction with auxin response factors (ARFs), proteins that bind to the auxin-responsive promoter element (AuxRE). Formation of heterodimers with ARF proteins may alter their ability to modulate early auxin response genes expression. This is Auxin-responsive protein IAA16 (IAA16) from Arabidopsis thaliana (Mouse-ear cress).